Here is a 229-residue protein sequence, read N- to C-terminus: Large ribosomal subunit protein uL1 (229 aa).

It belongs to the universal ribosomal protein uL1 family. As to quaternary structure, part of the 50S ribosomal subunit.

Binds directly to 23S rRNA. The L1 stalk is quite mobile in the ribosome, and is involved in E site tRNA release. In terms of biological role, protein L1 is also a translational repressor protein, it controls the translation of the L11 operon by binding to its mRNA. The polypeptide is Large ribosomal subunit protein uL1 (Clostridium botulinum (strain 657 / Type Ba4)).